The primary structure comprises 336 residues: Dihydroorotate dehydrogenase (quinone) (336 aa).

FMN-binding positions include 62 to 66 and Thr-86; that span reads AGLDK. Position 66 (Lys-66) interacts with substrate. Residue 111 to 115 coordinates substrate; the sequence is NRMGF. FMN-binding residues include Asn-139 and Asn-172. Asn-172 is a binding site for substrate. The active-site Nucleophile is Ser-175. Asn-177 is a substrate binding site. FMN contacts are provided by Lys-217 and Thr-245. 246-247 lines the substrate pocket; it reads NT. Residues Gly-268, Gly-297, and 318–319 contribute to the FMN site; that span reads YS.

Belongs to the dihydroorotate dehydrogenase family. Type 2 subfamily. As to quaternary structure, monomer. The cofactor is FMN.

The protein localises to the cell membrane. It carries out the reaction (S)-dihydroorotate + a quinone = orotate + a quinol. It functions in the pathway pyrimidine metabolism; UMP biosynthesis via de novo pathway; orotate from (S)-dihydroorotate (quinone route): step 1/1. Its function is as follows. Catalyzes the conversion of dihydroorotate to orotate with quinone as electron acceptor. This chain is Dihydroorotate dehydrogenase (quinone), found in Shigella flexneri serotype 5b (strain 8401).